Here is a 140-residue protein sequence, read N- to C-terminus: Putative esterase SSO2140 (140 aa).

This sequence belongs to the thioesterase PaaI family.

The polypeptide is Putative esterase SSO2140 (Saccharolobus solfataricus (strain ATCC 35092 / DSM 1617 / JCM 11322 / P2) (Sulfolobus solfataricus)).